A 780-amino-acid chain; its full sequence is Cyclin-F (780 aa).

Positions 20-28 (KRRIKRRPR) match the Nuclear localization signal 1 motif. Residues 29–76 (NLTILSLPEDVLFHILKWLSVGDILAVRAVHSHLKYLVDNHASVWASA) enclose the F-box domain. The 118-residue stretch at 288–405 (QASQAVNKQQ…EIISALEGKI (118 aa)) folds into the Cyclin N-terminal domain. Short sequence motifs (d box) lie at residues 310 to 313 (RYIL), 343 to 346 (RRRL), and 349 to 352 (RYKL). Disordered stretches follow at residues 544 to 594 (QESP…AELS), 651 to 733 (QESS…STKP), and 745 to 780 (CRPPNPPESGAHQQPVKRQNLSVHSDEDTNLGFLKL). The Nuclear localization signal 2 motif lies at 568 to 574 (RRSKRKR). Residues 582-761 (RGSFVTTPTA…ESGAHQQPVK (180 aa)) form a PEST region. The span at 585-594 (FVTTPTAELS) shows a compositional bias: polar residues. Composition is skewed to low complexity over residues 695–708 (SGYSSVSSSSPISS) and 719–731 (STSVLSVGSHSST). Residues 762-765 (RQNL) carry the D box 4 motif.

Belongs to the cyclin family. Cyclin AB subfamily. In terms of assembly, component of the SCF(CCNF) complex consisting of CUL1, RBX1, SKP1 and CCNF. Interacts with SKP1. Interacts with CUL1. Interacts with CCNB1; interaction is required for nuclear localization of CCNB1. Interacts with CCP110; this interaction leads to CCP110 ubiquitination and degradation via the proteasome pathway. Interacts (via the Cyclin N-terminal domain) with MYBL2/BMYB. Interacts with FZR1/CDH1 (via N-terminus). Interacts with RRM2 (via Cy motif and when phosphorylated at 'Thr-33'); the interaction occurs exclusively in G2 and early M. Interacts with CDC6 (via Cy motif); the interaction takes place during G2 and M phase. In terms of processing, degraded when the spindle assembly checkpoint is activated during the G2-M transition. Degradation is not dependent on the proteasome or ubiquitin and depends on the C-terminal PEST sequence. Phosphorylated just before cells enter into mitosis. Post-translationally, ubiquitinated by the anaphase-promoting complex (APC/C); leading to its degradation by the proteasome.

It localises to the nucleus. The protein localises to the cytoplasm. It is found in the perinuclear region. Its subcellular location is the cytoskeleton. The protein resides in the microtubule organizing center. It localises to the centrosome. The protein localises to the centriole. Functionally, substrate recognition component of a SCF (SKP1-CUL1-F-box protein) E3 ubiquitin-protein ligase complex which mediates the ubiquitination and subsequent proteasomal degradation of target proteins. The SCF(CCNF) E3 ubiquitin-protein ligase complex is an integral component of the ubiquitin proteasome system (UPS) and links proteasome degradation to the cell cycle. Mediates the substrate recognition and the proteasomal degradation of various target proteins involved in the regulation of cell cycle progression and in the maintenance of genome stability. Mediates the ubiquitination and subsequent proteasomal degradation of CP110 during G2 phase, thereby acting as an inhibitor of centrosome reduplication. In G2, mediates the ubiquitination and proteasomal degradation of CDC6, thereby suppressing DNA re-replication and preventing genome instability. Involved in the ubiquitination and degradation of the substrate adapter CDH1 of the anaphase-promoting complex (APC/C), thereby acting as an antagonist of APC/C in regulating G1 progression and S phase entry. May play a role in the G2 cell cycle checkpoint control after DNA damage, possibly by promoting the ubiquitination of MYBL2/BMYB. The sequence is that of Cyclin-F (Ccnf) from Rattus norvegicus (Rat).